A 521-amino-acid chain; its full sequence is MAENPSLENHRIKSFKNKGRDVETMRRHRNEVTVELRKNKRDEHLLKKRNVPQEESLEDSDVDADFKAQNVTLEAILQNATSDNPVVQLSAVQAARKLLSSDRNPPIDDLIKSGILPILVKCLERDDNPSLQFEAAWALTNIASGTSAQTQAVVQSNAVPLFLRLLRSPHQNVCEQAVWALGNIIGDGPQCRDYVISLGVVKPLLSFISPSIPITFLRNVTWVIVNLCRNKDPPPPMETVQEILPALCVLIYHTDINILVDTVWALSYLTDGGNEQIQMVIDSGVVPFLVPLLSHQEVKVQTAALRAVGNIVTGTDEQTQVVLNCDVLSHFPNLLSHPKEKINKEAVWFLSNITAGNQQQVQAVIDAGLIPMIIHQLAKGDFGTQKEAAWAISNLTISGRKDQVEYLVQQNVIPPFCNLLSVKDSQVVQVVLDGLKNILIMAGDEASTIAEIIEECGGLEKIEVLQQHENEDIYKLAFEIIDQYFSGDDIDEDPCLIPEATQGGTYNFDPTANLQTKEFNF.

Residues 1–29 form a disordered region; it reads MAENPSLENHRIKSFKNKGRDVETMRRHR. Ala2 is subject to N-acetylalanine. In terms of domain architecture, IBB spans 2 to 58; the sequence is AENPSLENHRIKSFKNKGRDVETMRRHRNEVTVELRKNKRDEHLLKKRNVPQEESLE. The segment covering 18-29 has biased composition (basic and acidic residues); the sequence is KGRDVETMRRHR. The short motif at 43–52 is the Nuclear localization signal element; that stretch reads EHLLKKRNVP. Phosphoserine occurs at positions 56 and 60. An ARM 1; truncated repeat occupies 66–106; sequence FKAQNVTLEAILQNATSDNPVVQLSAVQAARKLLSSDRNPP. ARM repeat units follow at residues 107 to 149, 150 to 194, 195 to 233, 234 to 278, 279 to 318, 319 to 360, 361 to 400, and 401 to 443; these read IDDL…TSAQ, TQAV…CRDY, VISL…NKDP, PPPM…EQIQ, MVID…TDEQ, TQVV…NQQQ, VQAV…ISGR, and KDQV…IMAG. An NLS binding site (major) region spans residues 137-229; that stretch reads WALTNIASGT…VTWVIVNLCR (93 aa). The tract at residues 306–394 is NLS binding site (minor); it reads RAVGNIVTGT…QKEAAWAISN (89 aa). Residues 447–485 form an ARM 10; atypical repeat; it reads STIAEIIEECGGLEKIEVLQQHENEDIYKLAFEIIDQYF. Phosphotyrosine is present on Tyr484.

Belongs to the importin alpha family. Forms a complex with importin subunit beta-1. Interacts with DDX21. Interacts with NCBP1, NCBP2/CBP20 and NCBP3. Interacts with RCC1. Interacts with ZC3H11A. As to quaternary structure, (Microbial infection) Interacts with HIV-1 integrase; this interaction might play a role in nuclear import of HIV pre-integration complex. In terms of assembly, (Microbial infection) Interacts with influenza virus nucleoprotein; this interaction might play a role in nuclear import of viral genome. As to expression, ubiquitous. Highest levels in heart and skeletal muscle.

The protein localises to the cytoplasm. It is found in the nucleus. Functionally, functions in nuclear protein import as an adapter protein for nuclear receptor KPNB1. Binds specifically and directly to substrates containing either a simple or bipartite NLS motif. Docking of the importin/substrate complex to the nuclear pore complex (NPC) is mediated by KPNB1 through binding to nucleoporin FxFG repeats and the complex is subsequently translocated through the pore by an energy requiring, Ran-dependent mechanism. At the nucleoplasmic side of the NPC, Ran binds to importin-beta and the three components separate and importin-alpha and -beta are re-exported from the nucleus to the cytoplasm where GTP hydrolysis releases Ran from importin. The directionality of nuclear import is thought to be conferred by an asymmetric distribution of the GTP- and GDP-bound forms of Ran between the cytoplasm and nucleus. In vitro, mediates the nuclear import of human cytomegalovirus UL84 by recognizing a non-classical NLS. Recognizes NLSs of influenza A virus nucleoprotein probably through ARM repeats 7-9. The protein is Importin subunit alpha-4 (KPNA3) of Homo sapiens (Human).